The primary structure comprises 582 residues: Insulin-like growth factor 2 mRNA-binding protein 3 (582 aa).

RRM domains follow at residues 2–75 (NKLY…HSVP) and 81–156 (CKLQ…YIPD). Residues 164-190 (PAVGGRRGFNPRGPPRQGSPSLGARPK) form a disordered region. Phosphoserine is present on serine 182. KH domains follow at residues 194 to 259 (DVPL…CRNI), 275 to 342 (EIPL…EEEI), 408 to 473 (SETV…QGRI), and 490 to 556 (KLEA…QRKI). The disordered stretch occupies residues 562 to 582 (QVRRQQQPKPSAAGPPVARRK).

It belongs to the RRM IMP/VICKZ family. As to quaternary structure, homodimer and multimer.

It localises to the cytoplasm. It is found in the nucleus. The protein resides in the P-body. The protein localises to the stress granule. In terms of biological role, RNA-binding factor that may recruit target transcripts to cytoplasmic protein-RNA complexes (mRNPs). This transcript 'caging' into mRNPs allows mRNA transport and transient storage. It also modulates the rate and location at which target transcripts encounter the translational apparatus and shields them from endonuclease attacks or microRNA-mediated degradation. Preferentially binds to N6-methyladenosine (m6A)-containing mRNAs and increases their stability. Involved in neuronal crest migration. The polypeptide is Insulin-like growth factor 2 mRNA-binding protein 3 (igf2bp3) (Danio rerio (Zebrafish)).